A 502-amino-acid polypeptide reads, in one-letter code: Protein YdgA (502 aa).

The first 19 residues, 1-19 (MNKSLVAVGVIVALGVVWT), serve as a signal peptide directing secretion.

This sequence to E.coli YihF and H.influenzae HI_1236. Homodimer.

Its subcellular location is the cell inner membrane. In Escherichia coli (strain K12), this protein is Protein YdgA (ydgA).